A 263-amino-acid chain; its full sequence is HTH-type transcriptional repressor NanR (263 aa).

Positions 1 to 25 (MDVMNAFDSQAEDSPTSLGRSLRRR) are disordered. Positions 30–98 (KKLSEMVEEE…NGERARVSRP (69 aa)) constitute an HTH gntR-type domain. Positions 58-77 (ERELMAFFNVGRPSVREALA) form a DNA-binding region, H-T-H motif.

This sequence belongs to the NanR family.

Its function is as follows. Transcriptional repressor that controls expression of the genes required for the catabolism of sialic acids. In Salmonella choleraesuis (strain SC-B67), this protein is HTH-type transcriptional repressor NanR.